A 160-amino-acid chain; its full sequence is Cytochrome b6-f complex subunit 4 (160 aa).

3 helical membrane-spanning segments follow: residues 36 to 56 (LLYMFPVVILGTFALSISLAV), 95 to 115 (LLGVLCMAAVPVGLITVPFIE), and 131 to 151 (TLFLFGTATAVWLGIGAALPI).

Belongs to the cytochrome b family. PetD subfamily. As to quaternary structure, the 4 large subunits of the cytochrome b6-f complex are cytochrome b6, subunit IV (17 kDa polypeptide, petD), cytochrome f and the Rieske protein, while the 4 small subunits are petG, petL, petM and petN. The complex functions as a dimer.

It localises to the plastid. The protein localises to the chloroplast thylakoid membrane. Functionally, component of the cytochrome b6-f complex, which mediates electron transfer between photosystem II (PSII) and photosystem I (PSI), cyclic electron flow around PSI, and state transitions. The polypeptide is Cytochrome b6-f complex subunit 4 (Oltmannsiellopsis viridis (Marine flagellate)).